The primary structure comprises 182 residues: Translation initiation factor IF-3 (182 aa).

Positions 1–22 are disordered; the sequence is MPLGDCNISTPDNKQNRKNQEI.

It belongs to the IF-3 family. Monomer.

It is found in the cytoplasm. Its function is as follows. IF-3 binds to the 30S ribosomal subunit and shifts the equilibrium between 70S ribosomes and their 50S and 30S subunits in favor of the free subunits, thus enhancing the availability of 30S subunits on which protein synthesis initiation begins. The polypeptide is Translation initiation factor IF-3 (Xanthomonas campestris pv. campestris (strain ATCC 33913 / DSM 3586 / NCPPB 528 / LMG 568 / P 25)).